The primary structure comprises 859 residues: Heat shock protein 105 kDa (859 aa).

At Ser2 the chain carries N-acetylserine. Lys471 carries the N6-acetyllysine modification. A phosphoserine mark is found at Ser509 and Ser510. Disordered stretches follow at residues 515 to 585 (MDCQ…PPEA) and 797 to 859 (CEPV…MDLD). Residues 533–555 (QQDNNEAGTQPQVQTDGHQTSQS) are compositionally biased toward polar residues. Position 558 is a phosphoserine (Ser558). Position 562 is a phosphothreonine (Thr562). Composition is skewed to basic and acidic residues over residues 564 to 585 (EENK…PPEA) and 806 to 815 (PKIESPKLER). Ser810 is modified (phosphoserine). Thr816 is modified (phosphothreonine). Residues 822–831 (TDKKEEDLDG) are compositionally biased toward basic and acidic residues. Polar residues predominate over residues 850–859 (EKSSINMDLD).

This sequence belongs to the heat shock protein 70 family. Interacts with HSPA8/HSC70. Interacts with HSPA1A (via NBD) and HSPA1B (via NBD). Post-translationally, phosphorylation on Ser-509 may be important for regulation of the HSPA8/HSC70 chaperone activity.

The protein localises to the cytoplasm. Its function is as follows. Acts as a nucleotide-exchange factor (NEF) for chaperone proteins HSPA1A and HSPA1B, promoting the release of ADP from HSPA1A/B thereby triggering substrate release. Prevents the aggregation of denatured proteins in cells under severe stress, on which the ATP levels decrease markedly. Inhibits HSPA8/HSC70 ATPase and chaperone activities. In Bos taurus (Bovine), this protein is Heat shock protein 105 kDa (HSPH1).